The following is an 848-amino-acid chain: DNA-binding protein RFX6 (848 aa).

A DNA-binding region (RFX-type winged-helix) is located at residues 56–131 (TLQWLEDNYI…YHYYGIGIKE (76 aa)).

It belongs to the RFX family. Expressed in progenitors and hormone expressing cells of the islet lineage.

The protein localises to the nucleus. Its function is as follows. Transcription factor required to direct islet cell differentiation during endocrine pancreas development. The sequence is that of DNA-binding protein RFX6 (rfx6) from Danio rerio (Zebrafish).